A 308-amino-acid polypeptide reads, in one-letter code: Glutaminase (308 aa).

Substrate contacts are provided by Ser-66, Asn-117, Glu-161, Asn-168, Tyr-192, Tyr-244, and Val-262.

It belongs to the glutaminase family. Homotetramer.

The catalysed reaction is L-glutamine + H2O = L-glutamate + NH4(+). This Salmonella arizonae (strain ATCC BAA-731 / CDC346-86 / RSK2980) protein is Glutaminase.